Reading from the N-terminus, the 124-residue chain is Large ribosomal subunit protein bL12 (124 aa).

Basic and acidic residues predominate over residues 101–115 (ALSKDDAEKAKKELE). The disordered stretch occupies residues 101–124 (ALSKDDAEKAKKELEEAGATVELK).

It belongs to the bacterial ribosomal protein bL12 family. As to quaternary structure, homodimer. Part of the ribosomal stalk of the 50S ribosomal subunit. Forms a multimeric L10(L12)X complex, where L10 forms an elongated spine to which 2 to 4 L12 dimers bind in a sequential fashion. Binds GTP-bound translation factors.

In terms of biological role, forms part of the ribosomal stalk which helps the ribosome interact with GTP-bound translation factors. Is thus essential for accurate translation. The polypeptide is Large ribosomal subunit protein bL12 (Hahella chejuensis (strain KCTC 2396)).